We begin with the raw amino-acid sequence, 1464 residues long: DNA polymerase III PolC-type (1464 aa).

The Exonuclease domain occupies 426-582; that stretch reads YVVFDVETTG…YDAEATGRLL (157 aa).

The protein belongs to the DNA polymerase type-C family. PolC subfamily.

Its subcellular location is the cytoplasm. The enzyme catalyses DNA(n) + a 2'-deoxyribonucleoside 5'-triphosphate = DNA(n+1) + diphosphate. Functionally, required for replicative DNA synthesis. This DNA polymerase also exhibits 3' to 5' exonuclease activity. This chain is DNA polymerase III PolC-type, found in Streptococcus thermophilus (strain CNRZ 1066).